The chain runs to 316 residues: UDP-N-acetylenolpyruvoylglucosamine reductase (316 aa).

Positions 30 to 194 (VGGEADYLVF…LSVKFALAPG (165 aa)) constitute an FAD-binding PCMH-type domain. Residue Arg173 is part of the active site. The Proton donor role is filled by Ser223. The active site involves Glu293.

It belongs to the MurB family. FAD is required as a cofactor.

The protein resides in the cytoplasm. It catalyses the reaction UDP-N-acetyl-alpha-D-muramate + NADP(+) = UDP-N-acetyl-3-O-(1-carboxyvinyl)-alpha-D-glucosamine + NADPH + H(+). It functions in the pathway cell wall biogenesis; peptidoglycan biosynthesis. Cell wall formation. The protein is UDP-N-acetylenolpyruvoylglucosamine reductase of Streptococcus pneumoniae serotype 2 (strain D39 / NCTC 7466).